The following is a 780-amino-acid chain: E3 SUMO-protein ligase gei-17 (780 aa).

The tract at residues 181–210 is disordered; it reads APLHSSFPNHGRSSQQSLQKSEKSNRPKKM. The PINIT domain maps to 203–367; that stretch reads KSNRPKKMYA…AAGVYFVHRV (165 aa). The segment at 400 to 485 adopts an SP-RING-type zinc-finger fold; that stretch reads GEDDIAMDRL…LAKVDKNTTE (86 aa). Zn(2+)-binding residues include C431, H433, C454, and C457. Residues 519-530 are compositionally biased toward polar residues; sequence GTASCSSTNGNG. Disordered stretches follow at residues 519-544, 560-594, and 732-755; these read GTASCSSTNGNGLANEAAKKKPADDD, IMNSLNDSFSPGRHTASAELAAQKTPPQQKKKTKD, and QQHHLQQQQQQQQSPQIMSPSFYA. Residues 732 to 749 show a composition bias toward low complexity; that stretch reads QQHHLQQQQQQQQSPQIM.

It belongs to the PIAS family. In terms of assembly, may interact with gex-3.

It participates in protein modification; protein sumoylation. Its function is as follows. Functions as an E3-type smo-1 ligase. Mediates smo-1 conjugation to air-2 in vitro and is required for proper chromosome alignment. In the early embryo, specifically suppresses checkpoint activation in response to DNA damage, maybe by promoting mus-101 sumoylation. In embryos, plays a role in determining telomere localization in the nucleus. Acts with pie-1 to promote piRNA-mediated silencing and fertility in the adult germline. The protein is E3 SUMO-protein ligase gei-17 of Caenorhabditis elegans.